Consider the following 93-residue polypeptide: SH3 domain-binding glutamic acid-rich-like protein 3 (93 aa).

Serine 2 bears the N-acetylserine mark. The region spanning 2–93 (SGLRVYSTSV…NTLQEFLKLA (92 aa)) is the Glutaredoxin domain. Threonine 9 carries O-linked (GalNAc...) threonine glycosylation.

The protein belongs to the SH3BGR family. In terms of assembly, homodimer. Interacts with MYO1C (via its IQ motifs); the interaction is dependent on calcium and takes place at membrane ruffles. May be glycosylated.

The protein localises to the cytoplasm. It localises to the cytosol. It is found in the cell projection. The protein resides in the ruffle membrane. Its subcellular location is the nucleus. Could act as a modulator of glutaredoxin biological activity. May play a role in cytoskeleton organization. This is SH3 domain-binding glutamic acid-rich-like protein 3 (SH3BGRL3) from Bos taurus (Bovine).